Reading from the N-terminus, the 130-residue chain is Putative transposase for insertion sequence element IS6501 (130 aa).

The protein belongs to the transposase 11 family.

Its function is as follows. Involved in the transposition of the insertion sequence. This Brucella ovis (strain ATCC 25840 / 63/290 / NCTC 10512) protein is Putative transposase for insertion sequence element IS6501.